Here is a 614-residue protein sequence, read N- to C-terminus: Dihydroxy-acid dehydratase (614 aa).

Asp-81 lines the Mg(2+) pocket. Cys-122 is a [2Fe-2S] cluster binding site. 2 residues coordinate Mg(2+): Asp-123 and Lys-124. Lys-124 bears the N6-carboxylysine mark. Cys-196 serves as a coordination point for [2Fe-2S] cluster. Glu-492 is a binding site for Mg(2+). Ser-518 (proton acceptor) is an active-site residue.

This sequence belongs to the IlvD/Edd family. In terms of assembly, homodimer. [2Fe-2S] cluster is required as a cofactor. It depends on Mg(2+) as a cofactor.

The catalysed reaction is (2R)-2,3-dihydroxy-3-methylbutanoate = 3-methyl-2-oxobutanoate + H2O. It carries out the reaction (2R,3R)-2,3-dihydroxy-3-methylpentanoate = (S)-3-methyl-2-oxopentanoate + H2O. Its pathway is amino-acid biosynthesis; L-isoleucine biosynthesis; L-isoleucine from 2-oxobutanoate: step 3/4. It participates in amino-acid biosynthesis; L-valine biosynthesis; L-valine from pyruvate: step 3/4. Functions in the biosynthesis of branched-chain amino acids. Catalyzes the dehydration of (2R,3R)-2,3-dihydroxy-3-methylpentanoate (2,3-dihydroxy-3-methylvalerate) into 2-oxo-3-methylpentanoate (2-oxo-3-methylvalerate) and of (2R)-2,3-dihydroxy-3-methylbutanoate (2,3-dihydroxyisovalerate) into 2-oxo-3-methylbutanoate (2-oxoisovalerate), the penultimate precursor to L-isoleucine and L-valine, respectively. This Ruegeria sp. (strain TM1040) (Silicibacter sp.) protein is Dihydroxy-acid dehydratase.